We begin with the raw amino-acid sequence, 172 residues long: Ly6/PLAUR domain-containing protein 6B (172 aa).

Positions 1–25 (MLLLCHILAVTILQILIISENWVFA) are cleaved as a signal peptide. One can recognise a UPAR/Ly6 domain in the interval 46–137 (FKCFTCENAG…VELPTNHTNA (92 aa)). The tract at residues 46-140 (FKCFTCENAG…PTNHTNAVFA (95 aa)) is sufficient for inhibiting alpha-7 nAChR currents. Intrachain disulfides connect Cys48–Cys76, Cys51–Cys60, Cys69–Cys95, Cys101–Cys120, Cys106–Cys117, and Cys121–Cys126. Residue Ser148 is the site of GPI-anchor amidated serine attachment. A propeptide spans 149–172 (GSSVSSVPSPYLLVLAWLFMLPLL) (removed in mature form).

Its subcellular location is the cell membrane. Likely acts as a modulator of nicotinic acetylcholine receptors (nAChRs) activity. In vitro acts on nAChRs in a subtype- and stoichiometry-dependent manner. Modulates specifically alpha-3(3):beta-4(2) nAChRs by enhancing the sensitivity to ACh, decreasing ACh-induced maximal current response and increasing the rate of desensitization to ACh; has no effect on alpha-7 homomeric nAChRs; modulates alpha-3(2):alpha-5:beta-4(2) nAChRs in the context of CHRNA5/alpha-5 variant Asn-398 but not its wild-type sequence. However, according to another report in vitro it can weakly inhibits alpha-7 nAChRs. This chain is Ly6/PLAUR domain-containing protein 6B (Lypd6b), found in Mus musculus (Mouse).